A 302-amino-acid chain; its full sequence is Sulfate adenylyltransferase subunit 2 (302 aa).

The interval arginine 280–phenylalanine 302 is disordered.

Belongs to the PAPS reductase family. CysD subfamily. In terms of assembly, heterodimer composed of CysD, the smaller subunit, and CysN.

It carries out the reaction sulfate + ATP + H(+) = adenosine 5'-phosphosulfate + diphosphate. It functions in the pathway sulfur metabolism; hydrogen sulfide biosynthesis; sulfite from sulfate: step 1/3. Its function is as follows. With CysN forms the ATP sulfurylase (ATPS) that catalyzes the adenylation of sulfate producing adenosine 5'-phosphosulfate (APS) and diphosphate, the first enzymatic step in sulfur assimilation pathway. APS synthesis involves the formation of a high-energy phosphoric-sulfuric acid anhydride bond driven by GTP hydrolysis by CysN coupled to ATP hydrolysis by CysD. The protein is Sulfate adenylyltransferase subunit 2 of Vibrio parahaemolyticus serotype O3:K6 (strain RIMD 2210633).